Consider the following 240-residue polypeptide: 1-(5-phosphoribosyl)-5-[(5-phosphoribosylamino)methylideneamino] imidazole-4-carboxamide isomerase 2 (240 aa).

Asp-8 serves as the catalytic Proton acceptor. The Proton donor role is filled by Asp-129.

The protein belongs to the HisA/HisF family.

Its subcellular location is the cytoplasm. The catalysed reaction is 1-(5-phospho-beta-D-ribosyl)-5-[(5-phospho-beta-D-ribosylamino)methylideneamino]imidazole-4-carboxamide = 5-[(5-phospho-1-deoxy-D-ribulos-1-ylimino)methylamino]-1-(5-phospho-beta-D-ribosyl)imidazole-4-carboxamide. It participates in amino-acid biosynthesis; L-histidine biosynthesis; L-histidine from 5-phospho-alpha-D-ribose 1-diphosphate: step 4/9. The sequence is that of 1-(5-phosphoribosyl)-5-[(5-phosphoribosylamino)methylideneamino] imidazole-4-carboxamide isomerase 2 from Ruegeria sp. (strain TM1040) (Silicibacter sp.).